The chain runs to 423 residues: Putative competence-damage inducible protein (423 aa).

The protein belongs to the CinA family.

This Streptococcus pyogenes serotype M6 (strain ATCC BAA-946 / MGAS10394) protein is Putative competence-damage inducible protein.